A 579-amino-acid chain; its full sequence is MFS-type transporter olcL (579 aa).

Residues 1-24 (MANIGGSNAVSSAQGSQISDSPTT) show a composition bias toward polar residues. The interval 1–75 (MANIGGSNAV…GFGEDGCQSD (75 aa)) is disordered. Over residues 25–35 (VDDRLDEHKET) the composition is skewed to basic and acidic residues. Positions 36–54 (STQSIDHSENITQSPTSLQ) are enriched in polar residues. The N-linked (GlcNAc...) asparagine glycan is linked to N45. 9 helical membrane-spanning segments follow: residues 85 to 105 (LAAI…DNTI), 121 to 141 (GDVG…TLVF), 159 to 179 (AVFE…GLII), 183 to 203 (IAGL…SQSV), 214 to 234 (LVGG…GAFT), 241 to 261 (WCFY…LLFF), 282 to 302 (LIGL…LQWG), 310 to 330 (SGRI…FIMV), and 355 to 375 (LFNF…PVWF). A glycan (N-linked (GlcNAc...) asparagine) is linked at N380. A run of 5 helical transmembrane segments spans residues 388-408 (LMNL…GYGV), 411-431 (IGYY…GAGL), 439-459 (FGPS…GLGL), 479-501 (IAIV…QNVF), and 553-573 (FYVG…IQWI).

The protein belongs to the major facilitator superfamily. TCR/Tet family.

The protein resides in the peroxisome membrane. MFS-type transporter; part of the gene cluster that mediates the biosynthesis of 15-deoxyoxalicine B. The first step of the pathway is the synthesis of nicotinyl-CoA from nicotinic acid by the nicotinic acid-CoA ligase olcI. Nicotinyl-CoA is then a substrate of polyketide synthase olcA to produce 4-hydroxy-6-(3-pyridinyl)-2H-pyran-2-one (HPPO) which is further prenylated by the polyprenyl transferase olcH to yield geranylgeranyl-HPPO. Geranylgeranyl pyrophosphate is provided by the cluster-specific geranylgeranyl pyrophosphate synthase olcC. The FAD-dependent monooxygenase olcE catalyzes the epoxidation of geranylgeranyl-HPPO and the terpene cyclase olcD catalyzes the cyclization of the terpenoid component, resulting in the formation of the tricyclic terpene moiety seen in predecaturin E. The cytochrome P450 monooxygenase then catalyzes the allylic oxidation of predecaturin E, which is followed by spirocylization with concomitant loss of one molecule of water to form decaturin E. Decaturin E is the substrate of the cytochrome P450 monooxygenase olcJ which hydroxylates it at the C-29 position to form decaturin F. The short-chain dehydrogenase/reductase olcF may catalyze the oxidation of decaturin F to generate the 29-hydroxyl-27-one intermediate, and subsequent hemiacetal formation probably leads to the formation of decaturin C. The dioxygenase olcK may be a peroxisomal enzyme that catalyzes the hydroxylation of decaturin C into decaturin A once decaturin C is shuttled into the peroxisome by the MFS transporter olcL. Finally the cytochrome P450 monooxygenase olcB catalyzes the oxidative rearrangement to yield 15-deoxyoxalicine B. In the absence of olcJ, decaturin E may be shunted to a pathway in which it is oxidized to a ketone, possibly by olcF, to form decaturin D, which undergoes further allylic oxidation to yield decaturin G. Moreover, in the absence of oclK or oclL, oclB can convert decaturin C into 15-deoxyoxalicine A. The sequence is that of MFS-type transporter olcL from Penicillium canescens.